We begin with the raw amino-acid sequence, 138 residues long: MSEQSAPSPTPAAELSSDPASPLPQEIASALKRDSSGLVAAIVQQHDTNEVLMLGWMDDEALHRTMTSGRVTFYSRSRQEYWRKGDTSGHVQFVKSVALDCDGDALLIRVDQIGAACHTGTRTCFDGRDFTVVTGHRE.

A disordered region spans residues 1–23; the sequence is MSEQSAPSPTPAAELSSDPASPL. Mg(2+) is bound at residue aspartate 100. Cysteine 101 provides a ligand contact to Zn(2+). Residues aspartate 102 and aspartate 104 each contribute to the Mg(2+) site. Positions 117 and 124 each coordinate Zn(2+).

This sequence belongs to the PRA-CH family. In terms of assembly, homodimer. The cofactor is Mg(2+). Zn(2+) serves as cofactor.

The protein localises to the cytoplasm. It carries out the reaction 1-(5-phospho-beta-D-ribosyl)-5'-AMP + H2O = 1-(5-phospho-beta-D-ribosyl)-5-[(5-phospho-beta-D-ribosylamino)methylideneamino]imidazole-4-carboxamide. It functions in the pathway amino-acid biosynthesis; L-histidine biosynthesis; L-histidine from 5-phospho-alpha-D-ribose 1-diphosphate: step 3/9. In terms of biological role, catalyzes the hydrolysis of the adenine ring of phosphoribosyl-AMP. The polypeptide is Phosphoribosyl-AMP cyclohydrolase (Paenarthrobacter aurescens (strain TC1)).